The primary structure comprises 473 residues: MNNSKQFLKYQPLLEWLAKHEAYISPKLYIASSGVAGDGIFSTFDIDELEVLAKIPRRIILSPRNSRFGDSLYTHFNESNRSDDINFDNRDQVGLVMLVITVILENITDSPWNAYLNTLDETCMPDSPLLWKDKTCLEGTSMLDVINTNLRVYKNQYDQLVRPYFYKHADLKQLCPKWNQYLETCVLVQSRCFYVNSYYGLSLIPFFDIFNHKSGPAIASLHCQESNDHKGDIKIEFISFQYIRKMSEIFNSFGNFAADELFTQYGFIDTACKVWRVDMTMIAYETNRNFYMEWIHKKRIINTQELLVTPTTYANDKSETLRSVMIRQPMDLYIITDHGPSYGLYLYLFFCIYKIKFQKCDMNIVMLTKYFNEIWAVFIAHKEGEKEKVVAQLSGFSFYCKAIEFLQMLCQKRISRFKNGGLTAEAYKTLLCDPTLKRENRSRLVLQIFYHELNLLEKSMQETIYLCTENFED.

The SET domain maps to 26-254 (PKLYIASSGV…KMSEIFNSFG (229 aa)).

This is an uncharacterized protein from Schizosaccharomyces pombe (strain 972 / ATCC 24843) (Fission yeast).